The following is a 543-amino-acid chain: CTP synthase (543 aa).

The amidoligase domain stretch occupies residues 1–265 (MARYIFITGG…DDEVLAAFAI (265 aa)). A CTP-binding site is contributed by Ser-13. Residue Ser-13 participates in UTP binding. Residue 14–19 (SLGKGL) participates in ATP binding. Tyr-54 is an L-glutamine binding site. Asp-71 serves as a coordination point for ATP. Positions 71 and 139 each coordinate Mg(2+). CTP contacts are provided by residues 146-148 (DIE), 186-191 (KTKPTQ), and Lys-222. Residues 186 to 191 (KTKPTQ) and Lys-222 each bind UTP. An ATP-binding site is contributed by 238–240 (RDA). The region spanning 291 to 542 (TIAIVGKYTG…IEAALVRSRL (252 aa)) is the Glutamine amidotransferase type-1 domain. Gly-353 contacts L-glutamine. Cys-380 functions as the Nucleophile; for glutamine hydrolysis in the catalytic mechanism. Residues 381-384 (FGMQ), Glu-404, and Arg-470 contribute to the L-glutamine site. Catalysis depends on residues His-515 and Glu-517.

This sequence belongs to the CTP synthase family. Homotetramer.

The catalysed reaction is UTP + L-glutamine + ATP + H2O = CTP + L-glutamate + ADP + phosphate + 2 H(+). The enzyme catalyses L-glutamine + H2O = L-glutamate + NH4(+). It catalyses the reaction UTP + NH4(+) + ATP = CTP + ADP + phosphate + 2 H(+). The protein operates within pyrimidine metabolism; CTP biosynthesis via de novo pathway; CTP from UDP: step 2/2. Its activity is regulated as follows. Allosterically activated by GTP, when glutamine is the substrate; GTP has no effect on the reaction when ammonia is the substrate. The allosteric effector GTP functions by stabilizing the protein conformation that binds the tetrahedral intermediate(s) formed during glutamine hydrolysis. Inhibited by the product CTP, via allosteric rather than competitive inhibition. Catalyzes the ATP-dependent amination of UTP to CTP with either L-glutamine or ammonia as the source of nitrogen. Regulates intracellular CTP levels through interactions with the four ribonucleotide triphosphates. In Rhodopseudomonas palustris (strain HaA2), this protein is CTP synthase.